A 256-amino-acid polypeptide reads, in one-letter code: Cell division protein DivIB (256 aa).

At 1–23 the chain is on the cytoplasmic side; that stretch reads MSKDLISTDEYIKIKKKRKRIKK. Residues 24-44 form a helical membrane-spanning segment; that stretch reads IVVLFIFLISILVTLCLKIPY. The region spanning 45–113 is the POTRA domain; the sequence is FNIESIEIKG…NKLQIYVKER (69 aa). Residues 45-256 are Extracellular-facing; sequence FNIESIEIKG…EGNPVFYIEK (212 aa).

This sequence belongs to the FtsQ/DivIB family. DivIB subfamily.

It is found in the cell membrane. Cell division protein that may be involved in stabilizing or promoting the assembly of the division complex. In Clostridium botulinum (strain Hall / ATCC 3502 / NCTC 13319 / Type A), this protein is Cell division protein DivIB.